The chain runs to 456 residues: tRNA modification GTPase MnmE (456 aa).

Positions 26, 86, and 125 each coordinate (6S)-5-formyl-5,6,7,8-tetrahydrofolate. The region spanning 222-376 (GLSTAIIGRP…IEDRINQLFF (155 aa)) is the TrmE-type G domain. Asn-232 is a binding site for K(+). GTP-binding positions include 232–237 (NVGKSS), 251–257 (TDIEGTT), and 276–279 (DTAG). Ser-236 is a Mg(2+) binding site. Residues Thr-251, Ile-253, and Thr-256 each contribute to the K(+) site. Thr-257 lines the Mg(2+) pocket. Lys-456 is a (6S)-5-formyl-5,6,7,8-tetrahydrofolate binding site.

It belongs to the TRAFAC class TrmE-Era-EngA-EngB-Septin-like GTPase superfamily. TrmE GTPase family. Homodimer. Heterotetramer of two MnmE and two MnmG subunits. K(+) is required as a cofactor.

Its subcellular location is the cytoplasm. In terms of biological role, exhibits a very high intrinsic GTPase hydrolysis rate. Involved in the addition of a carboxymethylaminomethyl (cmnm) group at the wobble position (U34) of certain tRNAs, forming tRNA-cmnm(5)s(2)U34. In Streptococcus thermophilus (strain CNRZ 1066), this protein is tRNA modification GTPase MnmE.